A 159-amino-acid chain; its full sequence is Phosphopantetheine adenylyltransferase (159 aa).

Position 10 (Thr10) interacts with substrate. Residues 10-11 (TF) and His18 contribute to the ATP site. 3 residues coordinate substrate: Lys42, Met74, and Arg88. ATP-binding positions include 89 to 91 (GLR), Glu99, and 124 to 130 (WSFISSS).

The protein belongs to the bacterial CoaD family. As to quaternary structure, homohexamer. Mg(2+) serves as cofactor.

The protein localises to the cytoplasm. The enzyme catalyses (R)-4'-phosphopantetheine + ATP + H(+) = 3'-dephospho-CoA + diphosphate. It participates in cofactor biosynthesis; coenzyme A biosynthesis; CoA from (R)-pantothenate: step 4/5. Functionally, reversibly transfers an adenylyl group from ATP to 4'-phosphopantetheine, yielding dephospho-CoA (dPCoA) and pyrophosphate. The sequence is that of Phosphopantetheine adenylyltransferase from Enterobacter sp. (strain 638).